We begin with the raw amino-acid sequence, 556 residues long: Dihydroxy-acid dehydratase (556 aa).

Aspartate 78 lines the Mg(2+) pocket. A [2Fe-2S] cluster-binding site is contributed by cysteine 119. Mg(2+)-binding residues include aspartate 120 and lysine 121. Lysine 121 is subject to N6-carboxylysine. Cysteine 191 is a [2Fe-2S] cluster binding site. Glutamate 442 contributes to the Mg(2+) binding site. Residue serine 468 is the Proton acceptor of the active site.

This sequence belongs to the IlvD/Edd family. Homodimer. It depends on [2Fe-2S] cluster as a cofactor. Mg(2+) serves as cofactor.

The enzyme catalyses (2R)-2,3-dihydroxy-3-methylbutanoate = 3-methyl-2-oxobutanoate + H2O. It catalyses the reaction (2R,3R)-2,3-dihydroxy-3-methylpentanoate = (S)-3-methyl-2-oxopentanoate + H2O. The protein operates within amino-acid biosynthesis; L-isoleucine biosynthesis; L-isoleucine from 2-oxobutanoate: step 3/4. It participates in amino-acid biosynthesis; L-valine biosynthesis; L-valine from pyruvate: step 3/4. Functionally, functions in the biosynthesis of branched-chain amino acids. Catalyzes the dehydration of (2R,3R)-2,3-dihydroxy-3-methylpentanoate (2,3-dihydroxy-3-methylvalerate) into 2-oxo-3-methylpentanoate (2-oxo-3-methylvalerate) and of (2R)-2,3-dihydroxy-3-methylbutanoate (2,3-dihydroxyisovalerate) into 2-oxo-3-methylbutanoate (2-oxoisovalerate), the penultimate precursor to L-isoleucine and L-valine, respectively. The polypeptide is Dihydroxy-acid dehydratase (Clostridium kluyveri (strain NBRC 12016)).